We begin with the raw amino-acid sequence, 257 residues long: MDHLLQHQDVFGNYNKAREAMGLSYSSNPTPLDNDQKKPSPATAVTRPQPPELALRCPRCDSTNTKFCYYNNYSLTQPRYFCKSCRRYWTKGGTLRNIPVGGGCRKNKRSTSSAARSLRTTPEPASHDGKVFSAAGFNGYSNNEHIDLSLAFALLNKQHPGSSSQLGFHSELGSSHQSDMEGMFGTSQQKENATYAFGNGSSGLGDPSRVLWGFPWQMNGESFGMMNIGGGGGHVDQIDSGREMWTNMNYINSGALM.

Residues 23-50 form a disordered region; that stretch reads LSYSSNPTPLDNDQKKPSPATAVTRPQP. Residues 24 to 33 are compositionally biased toward polar residues; sequence SYSSNPTPLD. The Dof-type zinc-finger motif lies at 55–109; sequence LRCPRCDSTNTKFCYYNNYSLTQPRYFCKSCRRYWTKGGTLRNIPVGGGCRKNKR. Positions 57, 60, 82, and 85 each coordinate Zn(2+). The tract at residues 104–127 is disordered; the sequence is CRKNKRSTSSAARSLRTTPEPASH. The segment covering 110 to 121 has biased composition (low complexity); it reads STSSAARSLRTT.

The PEAR proteins (e.g. DOF2.4, DOF5.1, DOF3.2, DOF1.1, DOF5.6 and DOF5.3) form a short-range concentration gradient that peaks at protophloem sieve elements (PSE). Accumulates in the stele.

Its subcellular location is the nucleus. Functionally, transcription factor that binds specifically to a 5'-AA[AG]G-3' consensus core sequence. The PEAR proteins (e.g. DOF2.4, DOF5.1, DOF3.2, DOF1.1, DOF5.6 and DOF5.3) activate gene expression that promotes radial growth of protophloem sieve elements. This Arabidopsis thaliana (Mouse-ear cress) protein is Dof zinc finger protein DOF5.3.